A 486-amino-acid chain; its full sequence is Na(+)/H(+) antiporter NhaA 2 (486 aa).

11 helical membrane-spanning segments follow: residues 58–78 (GGLLLLAATVAALVWANTAPG), 102–122 (LTDWVADALLAVFFFTVGLEL), 138–158 (ALPVAAAAGGMLAPALLCLAL), 168–188 (AWAIPVATDIAFALGVLSLAG), 198–218 (VLLGLAVADDLGGILLIALGL), 220–240 (HGINPAWLATATTLLATTALA), 260–280 (ISLHAAGIHPTVAGVALGLLV), 300–320 (LGPINAAVILPAFALSATGVS), 338–358 (VAVGLLAGKLLGVPAGAWLAV), 374–394 (LVPLGLLAGIGYTVSLLITRL), and 404–424 (GASTAILTASVAASALALTAL). Positions 432 to 486 (GAPATRGSSRPATQVGGVAGPIPQTRRESDGGPTGGQEPPPARVRRAPPASPHPR) are disordered.

This sequence belongs to the NhaA Na(+)/H(+) (TC 2.A.33) antiporter family.

It is found in the cell membrane. It carries out the reaction Na(+)(in) + 2 H(+)(out) = Na(+)(out) + 2 H(+)(in). Na(+)/H(+) antiporter that extrudes sodium in exchange for external protons. In Frankia alni (strain DSM 45986 / CECT 9034 / ACN14a), this protein is Na(+)/H(+) antiporter NhaA 2.